The chain runs to 134 residues: Probable glycine cleavage system H protein (134 aa).

The Lipoyl-binding domain occupies 29–110 (TVLVGITDYA…PYEAWIAKIK (82 aa)). An N6-lipoyllysine modification is found at K70.

It belongs to the GcvH family. The glycine cleavage system is composed of four proteins: P, T, L and H. Requires (R)-lipoate as cofactor.

The glycine cleavage system catalyzes the degradation of glycine. The H protein shuttles the methylamine group of glycine from the P protein to the T protein. This chain is Probable glycine cleavage system H protein, found in Pyrococcus furiosus (strain ATCC 43587 / DSM 3638 / JCM 8422 / Vc1).